A 498-amino-acid polypeptide reads, in one-letter code: Acetylcholine receptor subunit alpha-type acr-16 (498 aa).

Residues 1–19 (MSVCTLLISCAILAAPTLG) form the signal peptide. Residues 20 to 230 (SLQERRLYED…FYLHMRRRTL (211 aa)) lie on the Extracellular side of the membrane. N-linked (GlcNAc...) asparagine glycosylation is found at N43 and N93. 2 disulfides stabilise this stretch: C147–C161 and C211–C212. 3 helical membrane passes run 231–252 (YYGF…LGFT), 261–279 (ITLQ…SIVS), and 295–314 (FFTC…VYVL). Residues 315–472 (NLHYRTPETH…WKFAAMVVDR (158 aa)) are Cytoplasmic-facing. The helical transmembrane segment at 473 to 493 (LCLYVFTIFIIVSTIGIFWSA) threads the bilayer.

Belongs to the ligand-gated ion channel (TC 1.A.9) family. Acetylcholine receptor (TC 1.A.9.1) subfamily. Expressed in the body wall muscle.

It is found in the postsynaptic cell membrane. It localises to the cell membrane. Its function is as follows. After binding acetylcholine, the AChR responds by an extensive change in conformation that affects all subunits and leads to opening of an ion-conducting channel across the plasma membrane. A subunit of the levamisole-insensitive nicotinic receptor. This is Acetylcholine receptor subunit alpha-type acr-16 (acr-16) from Caenorhabditis elegans.